Consider the following 195-residue polypeptide: Interferon tau-1 (195 aa).

The signal sequence occupies residues 1-23; the sequence is MAFVLSLLMALVLVSYGPGGSLG. 2 disulfides stabilise this stretch: C24-C122 and C52-C162.

Belongs to the alpha/beta interferon family. IFN-alphaII subfamily. Constitutively and exclusively expressed in the mononuclear cells of the extraembryonic trophectoderm.

It localises to the secreted. In terms of biological role, paracrine hormone primarily responsible for maternal recognition of pregnancy. Interacts with endometrial receptors, probably type I interferon receptors, and blocks estrogen receptor expression, preventing the estrogen-induced increase in oxytocin receptor expression in the endometrium. This results in the suppression of the pulsatile endometrial release of the luteolytic hormone prostaglandin F2-alpha, hindering the regression of the corpus luteum (luteolysis) and therefore a return to ovarian cyclicity. This, and a possible direct effect of IFN-tau on prostaglandin synthesis, leads in turn to continued ovarian progesterone secretion, which stimulates the secretion by the endometrium of the nutrients required for the growth of the conceptus. In summary, displays particularly high antiviral and antiproliferative potency concurrently with particular weak cytotoxicity, high antiluteolytic activity and immunomodulatory properties. In contrast with other IFNs, IFN-tau is not virally inducible. This is Interferon tau-1 (IFNT1) from Ovis aries (Sheep).